The primary structure comprises 913 residues: DNA polymerase I (913 aa).

The region spanning 1 to 305 (MSQAPLVLVD…AGENGEAETP (305 aa)) is the 5'-3' exonuclease domain. Residues 306-501 (IQAEVDYDVV…LHQALWQKLE (196 aa)) form the 3'-5' exonuclease domain. Residues 505–913 (SLARVLTDIE…GVGSNWDEAH (409 aa)) are polymerase.

Belongs to the DNA polymerase type-A family. As to quaternary structure, single-chain monomer with multiple functions.

The catalysed reaction is DNA(n) + a 2'-deoxyribonucleoside 5'-triphosphate = DNA(n+1) + diphosphate. In addition to polymerase activity, this DNA polymerase exhibits 3'-5' and 5'-3' exonuclease activity. In Pseudomonas aeruginosa (strain ATCC 15692 / DSM 22644 / CIP 104116 / JCM 14847 / LMG 12228 / 1C / PRS 101 / PAO1), this protein is DNA polymerase I (polA).